A 204-amino-acid polypeptide reads, in one-letter code: Large ribosomal subunit protein uL13 (204 aa).

Belongs to the universal ribosomal protein uL13 family.

The protein is Large ribosomal subunit protein uL13 (RpL13A) of Spodoptera frugiperda (Fall armyworm).